The following is a 336-amino-acid chain: Phospho-N-acetylmuramoyl-pentapeptide-transferase (336 aa).

The next 10 helical transmembrane spans lie at 3-23 (LTLI…PYFI), 53-73 (GGTV…LFSI), 78-98 (SLAL…IGFL), 118-138 (LALQ…PSGI), 143-163 (VFGY…FWVV), 174-194 (GIDG…GVIA), 200-220 (FDVL…FCFN), 226-246 (VFMG…ISIA), 251-271 (WTLL…MLQV), and 316-336 (AFLW…LYVF).

The protein belongs to the glycosyltransferase 4 family. MraY subfamily. Mg(2+) is required as a cofactor.

The protein localises to the cell membrane. The catalysed reaction is UDP-N-acetyl-alpha-D-muramoyl-L-alanyl-gamma-D-glutamyl-L-lysyl-D-alanyl-D-alanine + di-trans,octa-cis-undecaprenyl phosphate = Mur2Ac(oyl-L-Ala-gamma-D-Glu-L-Lys-D-Ala-D-Ala)-di-trans,octa-cis-undecaprenyl diphosphate + UMP. Its pathway is cell wall biogenesis; peptidoglycan biosynthesis. Functionally, catalyzes the initial step of the lipid cycle reactions in the biosynthesis of the cell wall peptidoglycan: transfers peptidoglycan precursor phospho-MurNAc-pentapeptide from UDP-MurNAc-pentapeptide onto the lipid carrier undecaprenyl phosphate, yielding undecaprenyl-pyrophosphoryl-MurNAc-pentapeptide, known as lipid I. In Streptococcus pyogenes serotype M5 (strain Manfredo), this protein is Phospho-N-acetylmuramoyl-pentapeptide-transferase.